An 836-amino-acid polypeptide reads, in one-letter code: Serine/threonine-protein kinase ATG1 (836 aa).

One can recognise a Protein kinase domain in the interval Y21–V321. ATP-binding positions include I27 to V35 and K50. D168 acts as the Proton acceptor in catalysis. Disordered regions lie at residues E387–R425, N458–R489, and C619–A642. The segment covering L395 to Q404 has biased composition (low complexity). Composition is skewed to polar residues over residues R411–R425, N459–A468, and G630–P640. The interaction with ATG13 stretch occupies residues I571–S836.

Belongs to the protein kinase superfamily. Ser/Thr protein kinase family. APG1/unc-51/ULK1 subfamily. Homodimer. Dimerization requires the presence of ATG13. Forms a ternary complex with ATG13 and ATG17.

The protein localises to the cytoplasm. The protein resides in the preautophagosomal structure membrane. It carries out the reaction L-seryl-[protein] + ATP = O-phospho-L-seryl-[protein] + ADP + H(+). The enzyme catalyses L-threonyl-[protein] + ATP = O-phospho-L-threonyl-[protein] + ADP + H(+). Functionally, serine/threonine protein kinase involved in the cytoplasm to vacuole transport (Cvt) and found to be essential in autophagy, where it is required for the formation of autophagosomes. Involved in the clearance of protein aggregates which cannot be efficiently cleared by the proteasome. Required for selective autophagic degradation of the nucleus (nucleophagy) as well as for mitophagy which contributes to regulate mitochondrial quantity and quality by eliminating the mitochondria to a basal level to fulfill cellular energy requirements and preventing excess ROS production. Also involved in endoplasmic reticulum-specific autophagic process, in selective removal of ER-associated degradation (ERAD) substrates. Plays a key role in ATG9 and ATG23 cycling through the pre-autophagosomal structure and is necessary to promote ATG18 binding to ATG9 through phosphorylation of ATG9. Catalyzes phosphorylation of ATG4, decreasing the interaction between ATG4 and ATG8 and impairing deconjugation of PE-conjugated forms of ATG8. In Kluyveromyces marxianus (strain DMKU3-1042 / BCC 29191 / NBRC 104275) (Yeast), this protein is Serine/threonine-protein kinase ATG1.